Reading from the N-terminus, the 315-residue chain is Methionyl-tRNA formyltransferase (315 aa).

Serine 113 to proline 116 contributes to the (6S)-5,6,7,8-tetrahydrofolate binding site.

Belongs to the Fmt family.

It catalyses the reaction L-methionyl-tRNA(fMet) + (6R)-10-formyltetrahydrofolate = N-formyl-L-methionyl-tRNA(fMet) + (6S)-5,6,7,8-tetrahydrofolate + H(+). Attaches a formyl group to the free amino group of methionyl-tRNA(fMet). The formyl group appears to play a dual role in the initiator identity of N-formylmethionyl-tRNA by promoting its recognition by IF2 and preventing the misappropriation of this tRNA by the elongation apparatus. The polypeptide is Methionyl-tRNA formyltransferase (Shigella flexneri serotype 5b (strain 8401)).